Here is a 132-residue protein sequence, read N- to C-terminus: Small ribosomal subunit protein uS8c (132 aa).

The protein belongs to the universal ribosomal protein uS8 family. As to quaternary structure, part of the 30S ribosomal subunit.

The protein resides in the plastid. It is found in the chloroplast. One of the primary rRNA binding proteins, it binds directly to 16S rRNA central domain where it helps coordinate assembly of the platform of the 30S subunit. This chain is Small ribosomal subunit protein uS8c (rps8), found in Pinus thunbergii (Japanese black pine).